Here is a 201-residue protein sequence, read N- to C-terminus: Riboflavin synthase (201 aa).

2 Lumazine-binding repeats span residues 1 to 97 and 98 to 197; these read MFTG…LGGH and IVQG…ERLM. Residues 4–6, 47–49, 62–67, 101–103, K136, 145–147, and 162–167 contribute to the 2,4-dihydroxypteridine site; these read GIV, CLT, DVMAET, GHV, SLT, and SLIPTT.

In terms of assembly, homotrimer.

It carries out the reaction 2 6,7-dimethyl-8-(1-D-ribityl)lumazine + H(+) = 5-amino-6-(D-ribitylamino)uracil + riboflavin. The protein operates within cofactor biosynthesis; riboflavin biosynthesis; riboflavin from 2-hydroxy-3-oxobutyl phosphate and 5-amino-6-(D-ribitylamino)uracil: step 2/2. Functionally, catalyzes the dismutation of two molecules of 6,7-dimethyl-8-ribityllumazine, resulting in the formation of riboflavin and 5-amino-6-(D-ribitylamino)uracil. This Mycobacterium bovis (strain ATCC BAA-935 / AF2122/97) protein is Riboflavin synthase (ribE).